Reading from the N-terminus, the 199-residue chain is Ion-translocating oxidoreductase complex subunit A (199 aa).

6 helical membrane passes run 8–28, 49–69, 75–95, 106–126, 138–158, and 178–198; these read LFTI…QFLG, VVFV…FILV, FLRT…VEFI, SLGI…AVLL, VVFG…MAAI, and AFFI…VIPL.

The protein belongs to the NqrDE/RnfAE family. The Rnf complex is probably composed of eight subunits, including RnfA, RnfB, RnfC, RnfD, RnfE and RnfG.

Its subcellular location is the cell membrane. Part of a membrane-bound complex that couples electron transfer with translocation of ions across the membrane. Catalyzes Na(+) transport, most probably coupled to electron transfer from reduced ferredoxin to methanophenazine and heterodisulfide reductase. Involved in heterodisulfide reduction during methanogenesis from acetate. This chain is Ion-translocating oxidoreductase complex subunit A, found in Methanosarcina acetivorans (strain ATCC 35395 / DSM 2834 / JCM 12185 / C2A).